The primary structure comprises 180 residues: uncharacterized protein (180 aa).

Residues methionine 1–alanine 22 form the signal peptide.

Belongs to the fimbrial protein family.

In terms of biological role, part of the yehABCD fimbrial operon. Could contribute to adhesion to various surfaces in specific environmental niches. This is an uncharacterized protein from Escherichia coli (strain K12).